The sequence spans 598 residues: 2-succinyl-5-enolpyruvyl-6-hydroxy-3-cyclohexene-1-carboxylate synthase (598 aa).

Belongs to the TPP enzyme family. MenD subfamily. Homodimer. Mg(2+) serves as cofactor. Requires Mn(2+) as cofactor. It depends on thiamine diphosphate as a cofactor.

It carries out the reaction isochorismate + 2-oxoglutarate + H(+) = 5-enolpyruvoyl-6-hydroxy-2-succinyl-cyclohex-3-ene-1-carboxylate + CO2. Its pathway is quinol/quinone metabolism; 1,4-dihydroxy-2-naphthoate biosynthesis; 1,4-dihydroxy-2-naphthoate from chorismate: step 2/7. It functions in the pathway cofactor biosynthesis; phylloquinone biosynthesis. Functionally, catalyzes the thiamine diphosphate-dependent decarboxylation of 2-oxoglutarate and the subsequent addition of the resulting succinic semialdehyde-thiamine pyrophosphate anion to isochorismate to yield 2-succinyl-5-enolpyruvyl-6-hydroxy-3-cyclohexene-1-carboxylate (SEPHCHC). This chain is 2-succinyl-5-enolpyruvyl-6-hydroxy-3-cyclohexene-1-carboxylate synthase, found in Prochlorococcus marinus (strain NATL1A).